A 467-amino-acid polypeptide reads, in one-letter code: UDP-N-acetylmuramate--L-alanine ligase (467 aa).

112 to 118 (GTHGKTT) lines the ATP pocket.

It belongs to the MurCDEF family.

The protein resides in the cytoplasm. It catalyses the reaction UDP-N-acetyl-alpha-D-muramate + L-alanine + ATP = UDP-N-acetyl-alpha-D-muramoyl-L-alanine + ADP + phosphate + H(+). It functions in the pathway cell wall biogenesis; peptidoglycan biosynthesis. Cell wall formation. The polypeptide is UDP-N-acetylmuramate--L-alanine ligase (Paraburkholderia xenovorans (strain LB400)).